The primary structure comprises 102 residues: Circadian clock oscillator protein KaiB (102 aa).

It belongs to the KaiB family. Undergoes a major conformational rearrangment; in the free state forms homotetramers with 2 dimers. When bound to the CI domain of KaiC switches to a monomeric thioredoxin-fold (KaiB(fs)). Monomers, homodimers and homotetramers are detected in solution; at low concentrations only monomers are seen. In vitro forms KaiC(6):KaiB(1) and KaiC(6):KaiB(6) complexes. Only associates with 'Ser-431'-phosphorylated KaiC (and not with doubly phosphorylated KaiC). Complex formation between KaiB and KaiC is regulated by the phosphorylation state of KaiC and by an ATP hydrolysis-driven conformation change in the CI ring of KaiC; complex formation is slow. Slow complex formation is crucial for the timing of the circadian period. In low resolution cryo-EM forms a KaiC(6):KaiB(6) complex. The KaiABC complex composition changes during the circadian cycle to control KaiC phosphorylation. Complexes KaiC(6), KaiA(2-4):KaiC(6), KaiB(6):KaiC(6) and KaiC(6):KaiB(6):KaiA(12) are among the most important forms, many form cooperatively. The KaiB:KaiC complex is more prevalent at 16 hours (in the dark) than at 4 hours (in the light) in the circadian cycle. The KaiA:KaiB complex is only found at 20-24 hours in the circadian cycle (subjective night). Binds to the CI domain of KaiC; SasA and KaiB compete to bind to the CI domain.

Its subcellular location is the cytoplasm. The protein resides in the cell membrane. Key component of the KaiABC oscillator complex, which constitutes the main circadian regulator in cyanobacteria. Complex composition changes during the circadian cycle to control KaiC phosphorylation. KaiA stimulates KaiC autophosphorylation, while KaiB sequesters KaiA, leading to KaiC autodephosphorylation. KaiA binding to the KaiC CII domain yields KaiA(2-4):KaiC(6) complexes which stimulate KaiC autophosphorylation. Phospho-Ser-431 KaiC accumulation triggers binding of KaiB to form the KaiB(6):KaiC(6) complex, leading to changes in the output regulators CikA and SasA. KaiB switches to a thioredoxin-like fold (KaiB(fs)) in complex with KaiC. KaiB(6):KaiC(6) formation exposes a site for KaiA binding that sequesters KaiA from the CII domain, making the KaiC(6):KaiB(6):KaiA(12) complex that results in KaiC autodephosphorylation. Complete dephosphorylation of KaiC leads to dissociation of KaiA(2):KaiB(1), completing 1 cycle of the Kai oscillator. Functionally, circadian oscillations can be generated in vitro by incubating KaiA, KaiB and KaiC with 1 mM ATP. The cycle is self-sustainable for at least 3 cycles and resistant to temperature changes. A very robust clock is reconstituted with KaiA, KaiB, KaiC, SasA, CikA and RpaA; output is measured by transcription from an appropriate reporter. Its function is as follows. A metamorphic protein which reversibly switches between an inactive tetrameric fold and a rare, thioredoxin-like monomeric fold (KaiB(fs)). KaiB(fs) binds phospho-KaiC, KaiA and CikA. KaiA and CikA compete for binding to KaiB(fs), and KaiB(fs) and SasA compete for binding to KaiC, thus the clock oscillator and output signal pathway are tightly coupled. The polypeptide is Circadian clock oscillator protein KaiB (Synechococcus elongatus (strain ATCC 33912 / PCC 7942 / FACHB-805) (Anacystis nidulans R2)).